The sequence spans 179 residues: Ribosome maturation factor RimM (179 aa).

In terms of domain architecture, PRC barrel spans 97 to 170; that stretch reads DGELSWNFFV…LITVELPEGL (74 aa).

This sequence belongs to the RimM family. Binds ribosomal protein uS19.

It localises to the cytoplasm. An accessory protein needed during the final step in the assembly of 30S ribosomal subunit, possibly for assembly of the head region. Essential for efficient processing of 16S rRNA. May be needed both before and after RbfA during the maturation of 16S rRNA. It has affinity for free ribosomal 30S subunits but not for 70S ribosomes. In Bacteroides thetaiotaomicron (strain ATCC 29148 / DSM 2079 / JCM 5827 / CCUG 10774 / NCTC 10582 / VPI-5482 / E50), this protein is Ribosome maturation factor RimM.